The following is a 316-amino-acid chain: Methionyl-tRNA formyltransferase (316 aa).

111-114 (GLLP) contributes to the (6S)-5,6,7,8-tetrahydrofolate binding site.

The protein belongs to the Fmt family.

The catalysed reaction is L-methionyl-tRNA(fMet) + (6R)-10-formyltetrahydrofolate = N-formyl-L-methionyl-tRNA(fMet) + (6S)-5,6,7,8-tetrahydrofolate + H(+). In terms of biological role, attaches a formyl group to the free amino group of methionyl-tRNA(fMet). The formyl group appears to play a dual role in the initiator identity of N-formylmethionyl-tRNA by promoting its recognition by IF2 and preventing the misappropriation of this tRNA by the elongation apparatus. This Chlamydia trachomatis serovar L2b (strain UCH-1/proctitis) protein is Methionyl-tRNA formyltransferase.